Here is a 536-residue protein sequence, read N- to C-terminus: Indolin-2-one monooxygenase (536 aa).

The helical transmembrane segment at 18–34 threads the bilayer; it reads GTATHALLLGVLIFLVI. Residue Cys480 coordinates heme.

The protein belongs to the cytochrome P450 family. Heme is required as a cofactor.

The protein localises to the membrane. The catalysed reaction is indolin-2-one + reduced [NADPH--hemoprotein reductase] + O2 = 3-hydroxyindolin-2-one + oxidized [NADPH--hemoprotein reductase] + H2O + H(+). The protein operates within secondary metabolite biosynthesis; 2,4-dihydroxy-1,4-benzoxazin-3-one biosynthesis; 2,4-dihydroxy-1,4-benzoxazin-3-one from indoleglycerol phosphate: step 3/5. Functionally, catalyzes the conversion of indolin-2-one to 3-hydroxyindolin-2-one. The polypeptide is Indolin-2-one monooxygenase (CYP71C2) (Zea mays (Maize)).